The sequence spans 220 residues: Protein CREG1 (220 aa).

A signal peptide spans 1 to 31 (MAGLSRGSARALLAALLASTLLALLVSPARG). N-linked (GlcNAc...) asparagine glycans are attached at residues Asn160, Asn193, and Asn216.

It belongs to the CREG family. Homodimer. Interacts with IGF2R; the interaction is dependent on glycosylation. N-glycosylated.

Its subcellular location is the secreted. May contribute to the transcriptional control of cell growth and differentiation. Antagonizes transcriptional activation and cellular transformation by the adenovirus E1A protein. The transcriptional control activity of cell growth requires interaction with IGF2R. In Homo sapiens (Human), this protein is Protein CREG1 (CREG1).